Here is a 99-residue protein sequence, read N- to C-terminus: Protein adenylyltransferase MntA (99 aa).

Positions 33 to 47 (GSYVRGEAKEDSDVD) match the GSX(10)DXD motif motif. Catalysis depends on residues D45 and D47. 3 residues coordinate Mg(2+): D45, D47, and D77.

The protein belongs to the MntA antitoxin family. Mg(2+) is required as a cofactor.

It carries out the reaction L-tyrosyl-[protein] + ATP = O-(5'-adenylyl)-L-tyrosyl-[protein] + diphosphate. It catalyses the reaction O-(5'-adenylyl)-L-tyrosyl-[protein] + ATP = O-[5'-(adenylyl-(5'-&gt;3')-adenylyl)]-L-tyrosyl-[protein] + diphosphate. In terms of biological role, antitoxin component of a type VII toxin-antitoxin (TA) system. Overexpression in E.coli neutralizes the toxic effect of cognate toxin HepT. Neutralization is mostly due to AMPylation of the toxin by this enzyme. The sequence is that of Protein adenylyltransferase MntA from Thermococcus cleftensis (strain DSM 27260 / KACC 17922 / CL1).